Consider the following 475-residue polypeptide: Ankyrin repeat, SAM and basic leucine zipper domain-containing protein 1 (475 aa).

The interval 1–25 is disordered; sequence MAASALRGLPVAGGGESSESEDDGW. A phosphoserine mark is found at serine 17, serine 18, and serine 20. ANK repeat units follow at residues 45 to 74, 78 to 107, 110 to 144, 148 to 177, 181 to 210, and 214 to 243; these read EKKE…SVDS, YGWT…NASF, DKQS…DPNV, RLMT…EVNT, NGYT…NKML, and DGKM…PLEG. Residues 272–334 enclose the SAM domain; sequence SYTAFGDLEV…KILAALKELQ (63 aa).

As to quaternary structure, interacts with DDX4, PIWIL1, RANBP9 and TDRD1.

The protein resides in the cytoplasm. Plays a central role during spermatogenesis by repressing transposable elements and preventing their mobilization, which is essential for the germline integrity. Acts via the piRNA metabolic process, which mediates the repression of transposable elements during meiosis by forming complexes composed of piRNAs and Piwi proteins and governs the methylation and subsequent repression of transposons. Its association with pi-bodies suggests a participation in the primary piRNAs metabolic process. Required prior to the pachytene stage to facilitate the production of multiple types of piRNAs, including those associated with repeats involved in the regulation of retrotransposons. May act by mediating protein-protein interactions during germ cell maturation. The protein is Ankyrin repeat, SAM and basic leucine zipper domain-containing protein 1 (ASZ1) of Pan troglodytes (Chimpanzee).